A 254-amino-acid chain; its full sequence is Probable phosphatase TTE1963 (254 aa).

Residues histidine 14, histidine 16, histidine 22, histidine 47, glutamate 80, histidine 108, histidine 139, aspartate 200, and histidine 202 each coordinate Zn(2+).

The protein belongs to the PHP family. Zn(2+) is required as a cofactor.

The chain is Probable phosphatase TTE1963 from Caldanaerobacter subterraneus subsp. tengcongensis (strain DSM 15242 / JCM 11007 / NBRC 100824 / MB4) (Thermoanaerobacter tengcongensis).